Here is a 195-residue protein sequence, read N- to C-terminus: Adenylate kinase (195 aa).

8 to 16 contacts ATP; it reads GIPGVGKTT.

This sequence belongs to the archaeal adenylate kinase family.

It localises to the cytoplasm. It catalyses the reaction AMP + ATP = 2 ADP. The chain is Adenylate kinase from Saccharolobus islandicus (strain M.14.25 / Kamchatka #1) (Sulfolobus islandicus).